The following is a 525-amino-acid chain: MYTQADEYDGGDAGYEDDYSGYQGDGDDSVGSYNVPEEIKRFIHFFHQHVLEQNLYEIQSIYENGFNKLTDRYFNKTPWPEAEFIAPLVSGDQVFLILYKELYYRHIYNKLKPTVEQRFESYYNYCDLFNYILNTDEPVPLTLPNQWLWDIIDEFIYQFQAFSQFRSKLQNKPEDEIDVLRANSKIWNIHSVLNVLYSLVEKSRINYQLEMYNTNGNPDEVSGEFGIHPLYKMLGYFSLIGLLRLHSLLGDYFQAIKVLSNVELTRNTMYSRIPACQITTYYYVGFAYLMMRRYQDAIRCFSSVLLYIQRTKNMLQTKSYQYEEIMKKNDQMYNLLAIALTLCPQQLDENVHSQLREKCTEKMQKLQKGDLQMFEECFSYSCPKFVSPVPPNFDAPPANYNREPFNLQLKVFMNEVAQQSMIPVIRSYLKLYTTMPIAKLAAFLDMDEATFRNQLLCYKHKQRNLVWTKGTDGLDGEQQSSSEVDFYIDRDMIHIADTKVDRRYGEFFMRQIYKFDEMARNLQAL.

Over residues 1–19 (MYTQADEYDGGDAGYEDDY) the composition is skewed to acidic residues. A disordered region spans residues 1-21 (MYTQADEYDGGDAGYEDDYSG). The 207-residue stretch at 296–502 (DAIRCFSSVL…IHIADTKVDR (207 aa)) folds into the PCI domain.

It belongs to the eIF-3 subunit L family. Component of the eukaryotic translation initiation factor 3 (eIF-3) complex.

The protein resides in the cytoplasm. In terms of biological role, component of the eukaryotic translation initiation factor 3 (eIF-3) complex, which is involved in protein synthesis of a specialized repertoire of mRNAs and, together with other initiation factors, stimulates binding of mRNA and methionyl-tRNAi to the 40S ribosome. The eIF-3 complex specifically targets and initiates translation of a subset of mRNAs involved in cell proliferation. This Nematostella vectensis (Starlet sea anemone) protein is Eukaryotic translation initiation factor 3 subunit L.